A 737-amino-acid chain; its full sequence is Catalase-peroxidase (737 aa).

Positions 89 to 219 form a cross-link, tryptophyl-tyrosyl-methioninium (Trp-Tyr) (with M-245); it reads WHSAGTYRVF…LAASHMGLIY (131 aa). His-90 functions as the Proton acceptor in the catalytic mechanism. Positions 219-245 form a cross-link, tryptophyl-tyrosyl-methioninium (Tyr-Met) (with W-89); that stretch reads YVNPEGPNGNPDPKAAARDIRVTFGRM. His-260 contributes to the heme b binding site.

The protein belongs to the peroxidase family. Peroxidase/catalase subfamily. As to quaternary structure, homodimer or homotetramer. Heme b serves as cofactor. Post-translationally, formation of the three residue Trp-Tyr-Met cross-link is important for the catalase, but not the peroxidase activity of the enzyme.

It is found in the cytoplasm. It catalyses the reaction H2O2 + AH2 = A + 2 H2O. The catalysed reaction is 2 H2O2 = O2 + 2 H2O. Functionally, bifunctional enzyme with both catalase and broad-spectrum peroxidase activity. The protein is Catalase-peroxidase of Aspergillus terreus (strain NIH 2624 / FGSC A1156).